The following is a 203-amino-acid chain: Proteasome subunit beta 2 (203 aa).

A propeptide spans 1-9 (MGEEVQIGA) (removed in mature form; by autocatalysis). Threonine 10 functions as the Nucleophile in the catalytic mechanism.

It belongs to the peptidase T1B family. As to quaternary structure, the 20S proteasome core is composed of 14 alpha and 14 beta subunits that assemble into four stacked heptameric rings, resulting in a barrel-shaped structure. The two inner rings, each composed of seven catalytic beta subunits, are sandwiched by two outer rings, each composed of seven alpha subunits. The catalytic chamber with the active sites is on the inside of the barrel. Has a gated structure, the ends of the cylinder being occluded by the N-termini of the alpha-subunits. Is capped at one or both ends by the proteasome regulatory ATPase, PAN.

Its subcellular location is the cytoplasm. The enzyme catalyses Cleavage of peptide bonds with very broad specificity.. With respect to regulation, the formation of the proteasomal ATPase PAN-20S proteasome complex, via the docking of the C-termini of PAN into the intersubunit pockets in the alpha-rings, triggers opening of the gate for substrate entry. Interconversion between the open-gate and close-gate conformations leads to a dynamic regulation of the 20S proteasome proteolysis activity. Functionally, component of the proteasome core, a large protease complex with broad specificity involved in protein degradation. The polypeptide is Proteasome subunit beta 2 (Pyrobaculum arsenaticum (strain DSM 13514 / JCM 11321 / PZ6)).